We begin with the raw amino-acid sequence, 394 residues long: Elongation factor Tu (394 aa).

The 195-residue stretch at 10 to 204 (KPHVNVGTIG…ALDSYIPEPE (195 aa)) folds into the tr-type G domain. Residues 19-26 (GHVDHGKT) form a G1 region. 19–26 (GHVDHGKT) provides a ligand contact to GTP. Thr-26 is a binding site for Mg(2+). The segment at 60 to 64 (GITIS) is G2. The segment at 81-84 (DCPG) is G3. GTP contacts are provided by residues 81 to 85 (DCPGH) and 136 to 139 (NKCD). The G4 stretch occupies residues 136–139 (NKCD). Residues 174–176 (SAL) form a G5 region.

It belongs to the TRAFAC class translation factor GTPase superfamily. Classic translation factor GTPase family. EF-Tu/EF-1A subfamily. In terms of assembly, monomer.

It localises to the cytoplasm. The enzyme catalyses GTP + H2O = GDP + phosphate + H(+). In terms of biological role, GTP hydrolase that promotes the GTP-dependent binding of aminoacyl-tRNA to the A-site of ribosomes during protein biosynthesis. The chain is Elongation factor Tu from Alteromonas mediterranea (strain DSM 17117 / CIP 110805 / LMG 28347 / Deep ecotype).